The following is a 152-amino-acid chain: Leukocyte-associated immunoglobulin-like receptor 2 (152 aa).

The N-terminal stretch at 1–21 is a signal peptide; the sequence is MSPHLTALLGLVLCLAQTIHT. An Ig-like C2-type domain is found at 29–117; that stretch reads PSISAEPGTV…GWSEHSDFLE (89 aa). A disulfide bridge links Cys-49 with Cys-101. Residues 120–152 form a disordered region; sequence VKESSGGPDSPDTEPGSSAGTVPGTEASGFDAP.

It localises to the secreted. This is Leukocyte-associated immunoglobulin-like receptor 2 (LAIR2) from Homo sapiens (Human).